A 116-amino-acid chain; its full sequence is Calcium-regulated OB-fold protein CarO (116 aa).

The signal sequence occupies residues 1 to 21 (MKLRHLPLIAAIGLFSTVTLA).

The protein resides in the periplasm. In terms of biological role, plays a role in intracellular Ca(2+) homeostasis. Involved in cell protection against oxidative stress in strain 25W. In Pseudomonas aeruginosa (strain ATCC 15692 / DSM 22644 / CIP 104116 / JCM 14847 / LMG 12228 / 1C / PRS 101 / PAO1), this protein is Calcium-regulated OB-fold protein CarO.